The following is a 281-amino-acid chain: Energy-coupling factor transporter ATP-binding protein EcfA1 (281 aa).

The ABC transporter domain maps to 6-245; that stretch reads IKSEDLVFKY…VEKIKSIGLD (240 aa). Position 44–51 (44–51) interacts with ATP; sequence GHNGSGKS.

It belongs to the ABC transporter superfamily. Energy-coupling factor EcfA family. As to quaternary structure, forms a stable energy-coupling factor (ECF) transporter complex composed of 2 membrane-embedded substrate-binding proteins (S component), 2 ATP-binding proteins (A component) and 2 transmembrane proteins (T component).

The protein localises to the cell membrane. Functionally, ATP-binding (A) component of a common energy-coupling factor (ECF) ABC-transporter complex. Unlike classic ABC transporters this ECF transporter provides the energy necessary to transport a number of different substrates. The polypeptide is Energy-coupling factor transporter ATP-binding protein EcfA1 (Clostridium perfringens (strain ATCC 13124 / DSM 756 / JCM 1290 / NCIMB 6125 / NCTC 8237 / Type A)).